A 474-amino-acid chain; its full sequence is tRNA modification GTPase MnmE (474 aa).

(6S)-5-formyl-5,6,7,8-tetrahydrofolate contacts are provided by arginine 35, glutamate 92, and lysine 135. In terms of domain architecture, TrmE-type G spans 231 to 396 (GLHVVLAGQP…LRAALLEIAG (166 aa)). Asparagine 241 is a K(+) binding site. GTP contacts are provided by residues 241–246 (NVGKSS), 260–266 (TPIAGTT), 285–288 (DTAG), and 377–379 (SAR). Residue serine 245 coordinates Mg(2+). Threonine 260, isoleucine 262, and threonine 265 together coordinate K(+). A Mg(2+)-binding site is contributed by threonine 266. Lysine 474 is a (6S)-5-formyl-5,6,7,8-tetrahydrofolate binding site.

The protein belongs to the TRAFAC class TrmE-Era-EngA-EngB-Septin-like GTPase superfamily. TrmE GTPase family. As to quaternary structure, homodimer. Heterotetramer of two MnmE and two MnmG subunits. K(+) is required as a cofactor.

The protein resides in the cytoplasm. Functionally, exhibits a very high intrinsic GTPase hydrolysis rate. Involved in the addition of a carboxymethylaminomethyl (cmnm) group at the wobble position (U34) of certain tRNAs, forming tRNA-cmnm(5)s(2)U34. The chain is tRNA modification GTPase MnmE from Ralstonia nicotianae (strain ATCC BAA-1114 / GMI1000) (Ralstonia solanacearum).